Here is an 801-residue protein sequence, read N- to C-terminus: MPLKREDTERALQAMEACQSAGDEGFRTRAERLLTIFQSDLFQALLDIQEFYELTVFENQTAGRALTPGLKYRYHDEETPPLQHSPAHLSTGKSAEMLHLGDSGHAPIDGIHAYTPQMHVSPAKPVLLPSGHAPYYATSTLMNGMDGDVEYEEITLERGNSGLGFSIAGGTDNPHIGDDPSIFITKIIPGGAAAQDGRLRVNDSILFVNDVDVREVTHSFAVEALKEAGPIVRLYVLRHKPSAEKITELKLIKGPKGLGFSIAGGVGNQHVPGDNSIYVTKIIEGGAAHKDGRLQIGDKILAVNNMYLEEVMHEDAVAALKNTGDVVFLRVAKTLHQHHHQDAYNPPDITSSYSPHMDMSDYPQALSPSSPRRYSPIPKGLFLDDDISREPRRVVIHRGSTGLGFNIVGGEDGEGIFISFILAGGAADLSGELRKGDQILSVNGVDLRHATHEQAAAALKNAGQTVTIITQYRPEEYSRFEAKIHDLREQLMNSSLVSAAASLRSGKRSFFIRALFDYDKTADGGFLSQAVSFRFGDVLQVFDCSDEEWWQAGKLAPHGELEETGYIPSKRRVERKEWSRLKTRGREPVSGRSDYIVSYETVTQSEVHYARPVIILGPSKDRVNDDLLSEFPDKFGSCVPHTTRPKREYEMDGRDYHFVSSREQMEKDIQSHRFIEAGQYNSHLYGTSVQSVRQVAEQQGKHCILDVSANAVRRLQAAQLYPIAIFIRPSSLQNVLNISKRLTEEQARRALDRAVKLEQDFIECFSAIVEGESFEEIYHHVKSVIEEQSGPYIWIPARERL.

The L27 domain maps to 4-60; sequence KREDTERALQAMEACQSAGDEGFRTRAERLLTIFQSDLFQALLDIQEFYELTVFENQ. 2 PDZ domains span residues 153–240 and 248–335; these read EITL…LRHK and ELKL…AKTL. The disordered stretch occupies residues 339 to 373; that stretch reads HHQDAYNPPDITSSYSPHMDMSDYPQALSPSSPRR. One can recognise a PDZ 3 domain in the interval 393–474; that stretch reads RVVIHRGSTG…TVTIITQYRP (82 aa). In terms of domain architecture, SH3 spans 507–577; sequence KRSFFIRALF…PSKRRVERKE (71 aa). The region spanning 610 to 786 is the Guanylate kinase-like domain; that stretch reads ARPVIILGPS…IYHHVKSVIE (177 aa).

This sequence belongs to the MAGUK family. Ubiquitinated by MDM2 in response to NMDA receptor activation, leading to proteasome-mediated degradation of DLG4 which is required for AMPA receptor endocytosis. In terms of processing, palmitoylated. Palmitoylation is required for targeting to postsynaptic density, plasma membrane and synapses.

It localises to the cell membrane. It is found in the postsynaptic density. Its subcellular location is the synapse. In terms of biological role, postsynaptic scaffolding protein that plays a critical role in synaptogenesis and synaptic plasticity by providing a platform for the postsynaptic clustering of crucial synaptic proteins. The sequence is that of Disks large homolog 4 (dlg4) from Danio rerio (Zebrafish).